A 235-amino-acid chain; its full sequence is MKFFIFTCLLAVAFAKHEMEHVSSSEESINISQEKYKQEKNVINHPSKEDICATSCEEAVRNIKEVGYASSSSSEESVDIPAENVKVTVEDKHYLKQLEKISQFYQKFPQYLQALYQAQIVMNPWDQTKTSAYPFIPTVIQSGEELSTSEEPVSSSQEENTKTVDMESMEEFTKKTELTEEEKNRIKFLNKIKQYYQKFTWPQYIKTVHQKQKAMKPWNHIKTNSYQIIPNLRYF.

The N-terminal stretch at 1 to 15 is a signal peptide; it reads MKFFIFTCLLAVAFA. 12 positions are modified to phosphoserine: S23, S24, S25, S28, S47, S72, S73, S74, S77, S147, S149, and S168. Residues 144 to 158 show a composition bias toward polar residues; that stretch reads EELSTSEEPVSSSQE. The disordered stretch occupies residues 144–163; the sequence is EELSTSEEPVSSSQEENTKT.

This sequence belongs to the alpha-casein family. As to expression, mammary gland specific. Secreted in milk.

It is found in the secreted. Functionally, important role in the capacity of milk to transport calcium phosphate. This chain is Alpha-S2-casein (CSN1S2), found in Sus scrofa (Pig).